A 364-amino-acid chain; its full sequence is Tubulin alpha-2 chain (364 aa).

GTP-binding residues include glycine 59, threonine 60, threonine 94, asparagine 121, and asparagine 144. Residue glutamate 170 is part of the active site.

This sequence belongs to the tubulin family. In terms of assembly, dimer of alpha and beta chains. A typical microtubule is a hollow water-filled tube with an outer diameter of 25 nm and an inner diameter of 15 nM. Alpha-beta heterodimers associate head-to-tail to form protofilaments running lengthwise along the microtubule wall with the beta-tubulin subunit facing the microtubule plus end conferring a structural polarity. Microtubules usually have 13 protofilaments but different protofilament numbers can be found in some organisms and specialized cells. Requires Mg(2+) as cofactor. In terms of processing, undergoes a tyrosination/detyrosination cycle, the cyclic removal and re-addition of a C-terminal tyrosine residue by the enzymes tubulin tyrosine carboxypeptidase (TTCP) and tubulin tyrosine ligase (TTL), respectively.

Its subcellular location is the cytoplasm. The protein resides in the cytoskeleton. The catalysed reaction is GTP + H2O = GDP + phosphate + H(+). Tubulin is the major constituent of microtubules, a cylinder consisting of laterally associated linear protofilaments composed of alpha- and beta-tubulin heterodimers. Microtubules grow by the addition of GTP-tubulin dimers to the microtubule end, where a stabilizing cap forms. Below the cap, tubulin dimers are in GDP-bound state, owing to GTPase activity of alpha-tubulin. The protein is Tubulin alpha-2 chain (TUBA2) of Anemia phyllitidis (Fern).